Reading from the N-terminus, the 1273-residue chain is Clustered mitochondria protein homolog (1273 aa).

The Clu domain occupies 344–599 (PANNADYSRM…NTYPLDVKFA (256 aa)). 3 TPR repeats span residues 981 to 1013 (SDQKWAEGSMLLNEDQNAALTLFAQAIAIKEEV), 1022 to 1055 (AEKYLTLSTVYSKLGLTPEAVAFCRKSCAIYERV), and 1151 to 1184 (ATLESRIGNLYASINDFHNAMEHISKTPRIFTRE). Disordered stretches follow at residues 1217-1242 (AEQASVNSGSRKKNVNQKADAPKAEL) and 1254-1273 (IEGGSTEKSKKKSSKKKGKK). Residues 1262 to 1273 (SKKKSSKKKGKK) show a composition bias toward basic residues.

The protein belongs to the CLU family. As to quaternary structure, may associate with the eukaryotic translation initiation factor 3 (eIF-3) complex.

It is found in the cytoplasm. MRNA-binding protein involved in proper cytoplasmic distribution of mitochondria. The chain is Clustered mitochondria protein homolog from Vanderwaltozyma polyspora (strain ATCC 22028 / DSM 70294 / BCRC 21397 / CBS 2163 / NBRC 10782 / NRRL Y-8283 / UCD 57-17) (Kluyveromyces polysporus).